The sequence spans 276 residues: Octopine-binding periplasmic protein (276 aa).

Positions 1-20 (MKLKTILCAALLLVAGQAAA) are cleaved as a signal peptide. Cys57 and Cys64 form a disulfide bridge.

It belongs to the bacterial solute-binding protein 3 family.

It is found in the periplasm. Component of the octopine active transport system probably consisting of four subunits: Q, M, P and T. The sequence is that of Octopine-binding periplasmic protein (occT) from Agrobacterium tumefaciens (strain Ach5).